The sequence spans 249 residues: Isoprenyl transferase (249 aa).

Asp25 is a catalytic residue. Residue Asp25 coordinates Mg(2+). Substrate contacts are provided by residues 26 to 29, Trp30, Arg38, His42, and 70 to 72; these read GNGR and STE. Residue Asn73 is the Proton acceptor of the active site. Substrate contacts are provided by residues Trp74, Arg76, Arg197, and 203-205; that span reads RLS. Glu216 is a binding site for Mg(2+).

It belongs to the UPP synthase family. In terms of assembly, homodimer. Mg(2+) serves as cofactor.

Catalyzes the condensation of isopentenyl diphosphate (IPP) with allylic pyrophosphates generating different type of terpenoids. This Streptococcus mutans serotype c (strain ATCC 700610 / UA159) protein is Isoprenyl transferase.